Consider the following 329-residue polypeptide: Malate dehydrogenase (329 aa).

12–18 serves as a coordination point for NAD(+); that stretch reads GAAGQIG. Residues R95 and R101 each contribute to the substrate site. NAD(+) contacts are provided by residues N108, Q115, and 132–134; that span reads VGN. Residues N134 and R165 each coordinate substrate. Residue H190 is the Proton acceptor of the active site.

Belongs to the LDH/MDH superfamily. MDH type 2 family.

The catalysed reaction is (S)-malate + NAD(+) = oxaloacetate + NADH + H(+). Functionally, catalyzes the reversible oxidation of malate to oxaloacetate. The sequence is that of Malate dehydrogenase from Janthinobacterium sp. (strain Marseille) (Minibacterium massiliensis).